Reading from the N-terminus, the 392-residue chain is Succinate--CoA ligase [ADP-forming] subunit beta (392 aa).

Residues 9–244 enclose the ATP-grasp domain; that stretch reads KALLAQYGVG…LSEEESSEIE (236 aa). ATP is bound by residues K46, 53-55, E99, L102, and E107; that span reads GRG. The Mg(2+) site is built by N199 and D213. Substrate contacts are provided by residues N264 and 321–323; that span reads GIV.

Belongs to the succinate/malate CoA ligase beta subunit family. Heterotetramer of two alpha and two beta subunits. Mg(2+) serves as cofactor.

It carries out the reaction succinate + ATP + CoA = succinyl-CoA + ADP + phosphate. The enzyme catalyses GTP + succinate + CoA = succinyl-CoA + GDP + phosphate. The protein operates within carbohydrate metabolism; tricarboxylic acid cycle; succinate from succinyl-CoA (ligase route): step 1/1. In terms of biological role, succinyl-CoA synthetase functions in the citric acid cycle (TCA), coupling the hydrolysis of succinyl-CoA to the synthesis of either ATP or GTP and thus represents the only step of substrate-level phosphorylation in the TCA. The beta subunit provides nucleotide specificity of the enzyme and binds the substrate succinate, while the binding sites for coenzyme A and phosphate are found in the alpha subunit. This is Succinate--CoA ligase [ADP-forming] subunit beta from Wolinella succinogenes (strain ATCC 29543 / DSM 1740 / CCUG 13145 / JCM 31913 / LMG 7466 / NCTC 11488 / FDC 602W) (Vibrio succinogenes).